The primary structure comprises 272 residues: Orotidine 5'-phosphate decarboxylase (272 aa).

The active-site Proton donor is Lys-92.

It belongs to the OMP decarboxylase family. Type 2 subfamily.

It carries out the reaction orotidine 5'-phosphate + H(+) = UMP + CO2. It participates in pyrimidine metabolism; UMP biosynthesis via de novo pathway; UMP from orotate: step 2/2. This chain is Orotidine 5'-phosphate decarboxylase (pyrF), found in Deinococcus radiodurans (strain ATCC 13939 / DSM 20539 / JCM 16871 / CCUG 27074 / LMG 4051 / NBRC 15346 / NCIMB 9279 / VKM B-1422 / R1).